The sequence spans 105 residues: NADH-quinone oxidoreductase subunit K (105 aa).

Helical transmembrane passes span 9 to 29 (PNYY…GVLV), 34 to 54 (IVLF…LVTF), and 65 to 85 (IMAF…LAII).

Belongs to the complex I subunit 4L family. NDH-1 is composed of 14 different subunits. Subunits NuoA, H, J, K, L, M, N constitute the membrane sector of the complex.

Its subcellular location is the cell membrane. The catalysed reaction is a quinone + NADH + 5 H(+)(in) = a quinol + NAD(+) + 4 H(+)(out). Functionally, NDH-1 shuttles electrons from NADH, via FMN and iron-sulfur (Fe-S) centers, to quinones in the respiratory chain. The immediate electron acceptor for the enzyme in this species is believed to be a menaquinone. Couples the redox reaction to proton translocation (for every two electrons transferred, four hydrogen ions are translocated across the cytoplasmic membrane), and thus conserves the redox energy in a proton gradient. The protein is NADH-quinone oxidoreductase subunit K of Salinispora tropica (strain ATCC BAA-916 / DSM 44818 / JCM 13857 / NBRC 105044 / CNB-440).